We begin with the raw amino-acid sequence, 146 residues long: Snaclec CTL-Eoc124 (146 aa).

The signal sequence occupies residues 1–23; that stretch reads MGRFISVSFGLLVVFLSLSGTGA. 3 cysteine pairs are disulfide-bonded: Cys25/Cys36, Cys53/Cys142, and Cys119/Cys134. A C-type lectin domain is found at 32-143; sequence YQGHCYRVFN…CSRTNNVACK (112 aa).

Belongs to the snaclec family. As to quaternary structure, heterodimer; disulfide-linked. In terms of tissue distribution, expressed by the venom gland.

The protein localises to the secreted. Functionally, interferes with one step of hemostasis (modulation of platelet aggregation, or coagulation cascade, for example). This is Snaclec CTL-Eoc124 from Echis ocellatus (Ocellated saw-scaled viper).